Reading from the N-terminus, the 307-residue chain is Probable thioesterase KK1J (307 aa).

The protein belongs to the AMT4 thioesterase family.

It functions in the pathway secondary metabolite biosynthesis. Its function is as follows. Probable thioesterase; part of the gene cluster that mediates the biosynthesis of KK-1, a novel cyclic depsipeptide with 10 residues which is a promising active compound with high activity against many plant pathogens, especially Botrytis cinerea. Within the pathway, kk1J is not essential for the biosynthesis of KK-1, but plays a role for efficient production via correction of peptide chain synthesis by kk1B. The nonribosomal peptide synthetase (NRPS) kk1B catalyzes the elongation and cyclization of the decapeptide chain composed of 1 D-lactic acid residue (D-Lac), 1 pipecolic acid residue (Pip), 1 aspartic acid residue (Asp), 1 isoleucine residue (Ile), 1 glycine residue (Gly), 1 tyrosine residue (Tyr) and 4 valine residues (Val). The Asp, Ile and 3 Val residues are N-methylated by the 5 methyltransferase domains from the NRPS (found in modules 3, 5, 6, 7 and 9), whereas the Tyr residue is O-methylated by the cluster encoded O-methyltransferase kk1A. The thioesterase kk1J is likely to be involved in the corrective mechanism of peptide chain synthesis. The D-lactate dehydrogenase kk1H is involved in the synthesis of D-lactic acid from pyruvic acid, which is recognized by the A domain of the first kk1B module. The pyrroline-5-carboxylate reductase kk1I is involved in the synthesis of the L-pipecolic acid residue of KK-1 from delta-1-pyrroline-5-carboxylate (P5C), a metabolic intermediate of lysine. It still is unclear how kk1C and kk1D are involved in the production of KK-1. This is Probable thioesterase KK1J from Curvularia clavata.